Consider the following 268-residue polypeptide: 4-hydroxy-tetrahydrodipicolinate reductase (268 aa).

Residues 8–13 (GGGGKM) and Glu-34 each bind NAD(+). An NADP(+)-binding site is contributed by Lys-35. Residues 98–100 (GST) and 122–125 (APNM) each bind NAD(+). The active-site Proton donor/acceptor is the His-155. Residue His-156 participates in (S)-2,3,4,5-tetrahydrodipicolinate binding. The active-site Proton donor is Lys-159. A (S)-2,3,4,5-tetrahydrodipicolinate-binding site is contributed by 165–166 (GT).

This sequence belongs to the DapB family.

It is found in the cytoplasm. The catalysed reaction is (S)-2,3,4,5-tetrahydrodipicolinate + NAD(+) + H2O = (2S,4S)-4-hydroxy-2,3,4,5-tetrahydrodipicolinate + NADH + H(+). It catalyses the reaction (S)-2,3,4,5-tetrahydrodipicolinate + NADP(+) + H2O = (2S,4S)-4-hydroxy-2,3,4,5-tetrahydrodipicolinate + NADPH + H(+). Its pathway is amino-acid biosynthesis; L-lysine biosynthesis via DAP pathway; (S)-tetrahydrodipicolinate from L-aspartate: step 4/4. Functionally, catalyzes the conversion of 4-hydroxy-tetrahydrodipicolinate (HTPA) to tetrahydrodipicolinate. This chain is 4-hydroxy-tetrahydrodipicolinate reductase, found in Syntrophus aciditrophicus (strain SB).